Here is a 138-residue protein sequence, read N- to C-terminus: uncharacterized protein (138 aa).

The disordered stretch occupies residues 84-104 (PPKKTSPATSSSLKPRPGPRG). Residues 85–98 (PKKTSPATSSSLKP) show a composition bias toward low complexity.

To M.pneumoniae MPN_413 and MPN_463.

This is an uncharacterized protein from Mycoplasma pneumoniae (strain ATCC 29342 / M129 / Subtype 1) (Mycoplasmoides pneumoniae).